A 257-amino-acid chain; its full sequence is Protein vip1 (257 aa).

The RRM domain maps to 3-76 (NQVIVTNISP…NKIQITSEDG (74 aa)). Residues 74 to 99 (EDGGAASTTDQGGAGGDQAARQEDKP) form a disordered region. Over residues 75 to 84 (DGGAASTTDQ) the composition is skewed to low complexity. Residues S132 and S177 each carry the phosphoserine modification. The interval 217-257 (ARRLADAKNQAEGTASPASSTPTAPAEKEPTAPTTESKTTE) is disordered. At T230 the chain carries Phosphothreonine. Over residues 230–257 (TASPASSTPTAPAEKEPTAPTTESKTTE) the composition is skewed to low complexity. 2 positions are modified to phosphoserine: S232 and S235.

This is Protein vip1 (vip1) from Schizosaccharomyces pombe (strain 972 / ATCC 24843) (Fission yeast).